Consider the following 110-residue polypeptide: Acylphosphatase (110 aa).

Positions 21-108 (TRRYLVTGRV…TNLKSFRIEG (88 aa)) constitute an Acylphosphatase-like domain. Residues arginine 36 and asparagine 54 contribute to the active site.

This sequence belongs to the acylphosphatase family.

It carries out the reaction an acyl phosphate + H2O = a carboxylate + phosphate + H(+). This Koribacter versatilis (strain Ellin345) protein is Acylphosphatase (acyP).